A 410-amino-acid chain; its full sequence is Mating-type locus allele B7 protein (410 aa).

A variable domain between B alleles region spans residues 1–110; the sequence is MSSDPNFSLT…VNVGSPAVGC (110 aa). Residues 107-184 constitute a DNA-binding region (homeobox; TALE-type); it reads AVGCRNLSED…NARRRSGWSH (78 aa). The interval 111-410 is highly conserved between B alleles; the sequence is RNLSEDLPAY…PFLCLSVAFV (300 aa). Disordered regions lie at residues 202-225, 278-336, and 374-394; these read RAKL…SNNL, TPKP…PELS, and ARGN…QPDE. The Nuclear localization signal motif lies at 276–308; that stretch reads KKTPKPGMPRPVTTVAKRQPARKTKPAAKPNSR. The segment covering 306–336 has biased composition (polar residues); it reads NSRTANPRASTTPSIDSTLDSSKLESTPELS. Residues 333 to 410 are not essential for B7 function; sequence PELSMCSTAD…PFLCLSVAFV (78 aa). Positions 375 to 388 are enriched in basic residues; the sequence is RGNRKVKALPKRAG.

This sequence belongs to the TALE/M-ATYP homeobox family.

The protein resides in the nucleus. Functionally, the B locus has at least 25 alleles, and any combination of two different B alleles yields a multimeric regulatory protein, that activates genes responsible for the pathogenicity and for the sexual development of the fungus within the corn plant. The polypeptide is Mating-type locus allele B7 protein (Mycosarcoma maydis (Corn smut fungus)).